The chain runs to 419 residues: Gamma-glutamyl phosphate reductase (419 aa).

This sequence belongs to the gamma-glutamyl phosphate reductase family.

The protein resides in the cytoplasm. The catalysed reaction is L-glutamate 5-semialdehyde + phosphate + NADP(+) = L-glutamyl 5-phosphate + NADPH + H(+). Its pathway is amino-acid biosynthesis; L-proline biosynthesis; L-glutamate 5-semialdehyde from L-glutamate: step 2/2. Its function is as follows. Catalyzes the NADPH-dependent reduction of L-glutamate 5-phosphate into L-glutamate 5-semialdehyde and phosphate. The product spontaneously undergoes cyclization to form 1-pyrroline-5-carboxylate. The chain is Gamma-glutamyl phosphate reductase from Yersinia pseudotuberculosis serotype O:1b (strain IP 31758).